Consider the following 88-residue polypeptide: Small ribosomal subunit protein bS16 (88 aa).

The protein belongs to the bacterial ribosomal protein bS16 family.

This is Small ribosomal subunit protein bS16 from Halothermothrix orenii (strain H 168 / OCM 544 / DSM 9562).